The chain runs to 205 residues: Thymidine kinase (205 aa).

ATP is bound by residues 9-16 and 87-90; these read SAMNAGKS and DECQ. The active-site Proton acceptor is the Glu-88. Residues Cys-145, Cys-147, Cys-182, and His-185 each coordinate Zn(2+).

This sequence belongs to the thymidine kinase family. In terms of assembly, homotetramer.

The protein localises to the cytoplasm. The enzyme catalyses thymidine + ATP = dTMP + ADP + H(+). The sequence is that of Thymidine kinase from Shigella dysenteriae serotype 1 (strain Sd197).